The chain runs to 967 residues: Protein moonraker (967 aa).

The interval 178–201 (SHPGQSDLTVPNSPPTHDPGLQPH) is disordered. Residues 179 to 188 (HPGQSDLTVP) are compositionally biased toward polar residues. Phosphoserine occurs at positions 287 and 409. 2 disordered regions span residues 401–431 (ALER…SRPS) and 490–601 (KAGK…SHLT). Positions 525–543 (QSQPHSKSRVQQTTVSSRL) are enriched in polar residues. Positions 557-568 (WIPPNPTSPPAS) are enriched in pro residues. Residues 616 to 642 (AETSKRLKELEELKAKEIDSMQKQRLD) are a coiled coil. Residues S700 and S826 each carry the phosphoserine modification. A disordered region spans residues 849–872 (RPCNGNSLDESVGTEEGSEKREAP). A necessary and sufficient for CEP20-binding region spans residues 885–967 (GRAPLFVPPG…FTSEFLEAAT (83 aa)).

In terms of assembly, interacts with CEP63. Interacts with WDR62. Forms a complex with OFD1 and CEP20/FOR20. Interacts with PCM1.

It localises to the cytoplasm. The protein resides in the cytoskeleton. It is found in the microtubule organizing center. Its subcellular location is the centrosome. The protein localises to the centriole. It localises to the centriolar satellite. Its function is as follows. Involved in centriole duplication. Positively regulates CEP63 centrosomal localization. Required for WDR62 centrosomal localization and promotes the centrosomal localization of CDK2. May play a role in cilium assembly. This is Protein moonraker (KIAA0753) from Homo sapiens (Human).